Reading from the N-terminus, the 535-residue chain is CTP synthase (535 aa).

Residues 1–267 (MTKYIFVTGG…DQIVCDHLKL (267 aa)) are amidoligase domain. Ser-13 contacts CTP. Ser-13 is a UTP binding site. 14–19 (SLGKGI) is an ATP binding site. Tyr-54 is a binding site for L-glutamine. Asp-71 contributes to the ATP binding site. Mg(2+) is bound by residues Asp-71 and Glu-141. CTP contacts are provided by residues 148–150 (DIE), 188–193 (KTKPTQ), and Lys-224. Residues 188–193 (KTKPTQ) and Lys-224 each bind UTP. Position 240 to 242 (240 to 242 (RDA)) interacts with ATP. The 243-residue stretch at 292-534 (KIALVGKYVE…VKASLTNKES (243 aa)) folds into the Glutamine amidotransferase type-1 domain. L-glutamine is bound at residue Gly-354. Cys-381 acts as the Nucleophile; for glutamine hydrolysis in catalysis. L-glutamine contacts are provided by residues 382 to 385 (LGMQ), Glu-405, and Arg-462. Residues His-507 and Glu-509 contribute to the active site.

This sequence belongs to the CTP synthase family. In terms of assembly, homotetramer.

It carries out the reaction UTP + L-glutamine + ATP + H2O = CTP + L-glutamate + ADP + phosphate + 2 H(+). The catalysed reaction is L-glutamine + H2O = L-glutamate + NH4(+). It catalyses the reaction UTP + NH4(+) + ATP = CTP + ADP + phosphate + 2 H(+). It functions in the pathway pyrimidine metabolism; CTP biosynthesis via de novo pathway; CTP from UDP: step 2/2. Its activity is regulated as follows. Allosterically activated by GTP, when glutamine is the substrate; GTP has no effect on the reaction when ammonia is the substrate. The allosteric effector GTP functions by stabilizing the protein conformation that binds the tetrahedral intermediate(s) formed during glutamine hydrolysis. Inhibited by the product CTP, via allosteric rather than competitive inhibition. In terms of biological role, catalyzes the ATP-dependent amination of UTP to CTP with either L-glutamine or ammonia as the source of nitrogen. Regulates intracellular CTP levels through interactions with the four ribonucleotide triphosphates. The sequence is that of CTP synthase from Bacillus anthracis (strain A0248).